The chain runs to 66 residues: Large ribosomal subunit protein bL31 (66 aa).

Residues cysteine 16, cysteine 18, cysteine 36, and cysteine 39 each contribute to the Zn(2+) site.

This sequence belongs to the bacterial ribosomal protein bL31 family. Type A subfamily. As to quaternary structure, part of the 50S ribosomal subunit. It depends on Zn(2+) as a cofactor.

In terms of biological role, binds the 23S rRNA. The chain is Large ribosomal subunit protein bL31 from Campylobacter fetus subsp. fetus (strain 82-40).